A 426-amino-acid polypeptide reads, in one-letter code: Proline--tRNA ligase (426 aa).

This sequence belongs to the class-II aminoacyl-tRNA synthetase family. ProS type 2 subfamily. Homodimer.

The protein resides in the cytoplasm. The catalysed reaction is tRNA(Pro) + L-proline + ATP = L-prolyl-tRNA(Pro) + AMP + diphosphate. Its function is as follows. Catalyzes the attachment of proline to tRNA(Pro) in a two-step reaction: proline is first activated by ATP to form Pro-AMP and then transferred to the acceptor end of tRNA(Pro). This Rickettsia rickettsii (strain Iowa) protein is Proline--tRNA ligase.